The chain runs to 172 residues: Biogenesis of lysosome-related organelles complex 1 subunit 6 (172 aa).

A compositionally biased stretch (pro residues) spans 1–10; sequence MNVPVPPPPD. Disordered stretches follow at residues 1 to 35 and 136 to 172; these read MNVP…RSPD and ALKL…AKRT. Residues 143–164 are compositionally biased toward basic and acidic residues; sequence RQKEELEREQQREREFEREKQL.

This sequence belongs to the BLOC1S6 family. As to quaternary structure, homodimer. Octamer composed of one copy each BLOC1S1, BLOC1S2, BLOC1S3, BLOC1S4, BLOC1S5, BLOC1S6, DTNBP1/BLOC1S7 and SNAPIN/BLOC1S8. The BLOC-1 complex associates with the AP-3 protein complex and membrane protein cargos. Interacts with BLOC1S4, BLOC1S5, DTNBP1/BLOC1S7, F-actin, SNAP25 isoform 1 and isoform 2, SNAP47 and STX12. Component of the biogenesis of lysosome-related organelles complex 1 (BLOC-1) composed of BLOC1S1, BLOC1S2, BLOC1S3, BLOC1S4, BLOC1S5, BLOC1S6, DTNBP1/BLOC1S7 and SNAPIN/BLOC1S8.

The protein localises to the cytoplasm. Its subcellular location is the membrane. Its function is as follows. Component of the BLOC-1 complex, a complex that is required for normal biogenesis of lysosome-related organelles (LRO), such as platelet dense granules and melanosomes. In concert with the AP-3 complex, the BLOC-1 complex is required to target membrane protein cargos into vesicles assembled at cell bodies for delivery into neurites and nerve terminals. The BLOC-1 complex, in association with SNARE proteins, is also proposed to be involved in neurite extension. May play a role in intracellular vesicle trafficking, particularly in the vesicle-docking and fusion process. In Rattus norvegicus (Rat), this protein is Biogenesis of lysosome-related organelles complex 1 subunit 6 (Bloc1s6).